Consider the following 298-residue polypeptide: Glutamyl-Q tRNA(Asp) synthetase (298 aa).

Residues 9-13 and Glu-45 contribute to the L-glutamate site; that span reads RFAPS. The 'HIGH' region motif lies at 12-22; the sequence is PSPSGELHFGS. Zn(2+) contacts are provided by Cys-101, Cys-103, Tyr-115, and Cys-119. L-glutamate-binding residues include Tyr-172 and Arg-190. Residues 228–232 carry the 'KMSKS' region motif; sequence KLSKQ. Lys-231 provides a ligand contact to ATP.

The protein belongs to the class-I aminoacyl-tRNA synthetase family. GluQ subfamily. Requires Zn(2+) as cofactor.

In terms of biological role, catalyzes the tRNA-independent activation of glutamate in presence of ATP and the subsequent transfer of glutamate onto a tRNA(Asp). Glutamate is transferred on the 2-amino-5-(4,5-dihydroxy-2-cyclopenten-1-yl) moiety of the queuosine in the wobble position of the QUC anticodon. This is Glutamyl-Q tRNA(Asp) synthetase from Salmonella choleraesuis (strain SC-B67).